A 676-amino-acid chain; its full sequence is MINDKLPKIWHGGDYNPEQWDSQEIWDEDVRMFKLAGIDVATLNVFSWALNQPNEDTYNFEWLDDKINRLYENGIYTCLATSTAAHPAWMAKKYPDVLRVDFYGRKRKFGSRHNSCPNSPTYREYSEKIADKLAERYKDHPAVLIWHVSNEYGGYCYCDNCQDAFRVWLSDKYGTLEKLNKAWNTGFWGHTFYEWDEIVAPNMLSEEREDNVSDFQGISLDYRRFQSDSLLDCYKLEYNAIRKHTPNIPITTNLMGTYPMLDYFKWAKEMDVVSWDNYPAIDTPFSYTAMTHDLMRGLKSGQPFMLMEQTPSQQNWQPYNSLKRPGVMRLWSYQAIGRGADTILYFQLRRSVGACEKYHGAVIEHVGHEHTRVFNEVAQIGKEFNQLGDTLLDARVNARVAIVFDWENRWATELSSGPSVSLDYVNEVHKYYDALYKLNVQVDMVGVEEDLSQYDVVIAPVLYMVKEGYAAKVESFVENGGTFITTFFSGIVNETDIVTLGGYPGELRKVLGIWAEEIDALHPDETNEIVVNGSRGSLSGSYSCNLLFDLIHTEGAQAVAEYGSDFYQGMPVLTVNEFGKGKAWYVASSPDAEFLVDFLQTVCEEAGVEPLLSVPEGVETTERVKDGQTYLFVLNHNNKVESIDLKDSQYQELLSTQQLSGTVELEAKGVFILAKV.

Arg-112 is a substrate binding site. Zn(2+) is bound at residue Cys-116. Residue Asn-150 coordinates substrate. The active-site Proton donor is the Glu-151. Positions 156, 158, and 161 each coordinate Zn(2+). Residue Glu-308 is the Nucleophile of the active site. Substrate is bound by residues Trp-316 and 356 to 359; that span reads EKYH.

The protein belongs to the glycosyl hydrolase 42 family. Homodimer.

It carries out the reaction Hydrolysis of terminal non-reducing beta-D-galactose residues in beta-D-galactosides.. Its activity is regulated as follows. No activity lost during treatment with 100 mM EDTA after 2 hours, and the addition of 1 mM MgCl(2), 1 mM CaCl(2) or 1 mM MnCl(2) has no effect. However, the enzyme activity is inhibited by Zn(2+), Cu(2+), Ni(2+) and Co(2+) to different extents. Addition of Na(+) or K(+) slightly stimulates the enzyme activity at low concentrations and the optimal concentration is 250 mM. A further increase of their concentration of ions above the optimum value results in a decrease in enzyme activity. The enzyme is still active even in the presence of Na(+) or K(+) at a concentration up to 5 M. Hydrolyzes lactose, o-nitrophenyl-beta-D-galactopyranoside (ONPG), p-nitrophenyl-beta-D-galactopyranoside (PNPG), 5-bromo-4-chloro-3-indolyl-beta-D-galactopyranoside (X-gal), o-nitrophenyl-beta-D-fucopyranoside, p-nitrophenyl-beta-D-mannoside, o-nitrophenyl-beta-D-glucoside, p-nitrophenyl-beta-D-xyloside, p-nitrophenyl-beta-D-cellobioside, p-nitrophenyl-beta-D-arabinoside, p-nitrophenyl-beta-D-lactoside, p-nitrophenyl-beta-D-galacturonide, p-nitrophenyl-beta-D-glucuronide and p-nitrophenyl-alpha-D-galactoside with highest level of activity with ONPG as substrate, intermediate level of activity with PNPG and lower levels of activity with all other chromogenic nitrophenyl analogs. Able to hydrolyze 34% of milk lactose after 60 minutes at 5 degrees Celsius. This chain is Beta-galactosidase BgaP, found in Planococcus sp. (strain L4).